Here is a 362-residue protein sequence, read N- to C-terminus: 3-dehydroquinate synthase (362 aa).

NAD(+) contacts are provided by residues 71–76 (DGEQYK), 105–109 (GVVGD), 129–130 (TT), lysine 142, lysine 151, and 169–172 (CLKT). The Zn(2+) site is built by glutamate 184, histidine 247, and histidine 264.

This sequence belongs to the sugar phosphate cyclases superfamily. Dehydroquinate synthase family. Co(2+) is required as a cofactor. The cofactor is Zn(2+). NAD(+) serves as cofactor.

Its subcellular location is the cytoplasm. The catalysed reaction is 7-phospho-2-dehydro-3-deoxy-D-arabino-heptonate = 3-dehydroquinate + phosphate. Its pathway is metabolic intermediate biosynthesis; chorismate biosynthesis; chorismate from D-erythrose 4-phosphate and phosphoenolpyruvate: step 2/7. Functionally, catalyzes the conversion of 3-deoxy-D-arabino-heptulosonate 7-phosphate (DAHP) to dehydroquinate (DHQ). This is 3-dehydroquinate synthase from Escherichia coli (strain K12 / MC4100 / BW2952).